We begin with the raw amino-acid sequence, 284 residues long: 4-hydroxybenzoate octaprenyltransferase (284 aa).

9 helical membrane passes run 19–39 (IPIL…SHGL), 42–62 (ISYL…GCII), 85–105 (GQLS…VAFI), 107–127 (VLFL…LAIL), 134–154 (FFAI…FMAF), 165–185 (AWIF…IYAL), 211–231 (ILLF…YCDF), 233–253 (SFFY…YFLY), and 261–281 (CINA…MAVI).

It belongs to the UbiA prenyltransferase family. The cofactor is Mg(2+).

The protein resides in the cell inner membrane. It catalyses the reaction all-trans-octaprenyl diphosphate + 4-hydroxybenzoate = 4-hydroxy-3-(all-trans-octaprenyl)benzoate + diphosphate. Its pathway is cofactor biosynthesis; ubiquinone biosynthesis. Its function is as follows. Catalyzes the prenylation of para-hydroxybenzoate (PHB) with an all-trans polyprenyl group. Mediates the second step in the final reaction sequence of ubiquinone-8 (UQ-8) biosynthesis, which is the condensation of the polyisoprenoid side chain with PHB, generating the first membrane-bound Q intermediate 3-octaprenyl-4-hydroxybenzoate. This is 4-hydroxybenzoate octaprenyltransferase from Francisella tularensis subsp. novicida (strain U112).